Reading from the N-terminus, the 367-residue chain is Methionine aminopeptidase 1 (367 aa).

The C6H2-type zinc-finger motif lies at 3–57 (GILCASPGCGKPAKLQCPTCVNLKLETPSHFCSQECFKTFWPLHKMYHQKGQPEN). The Zn(2+) site is built by Cys-6, Cys-11, Cys-19, Cys-22, Cys-34, Cys-38, His-46, and His-50. His-185 lines the a protein pocket. 3 residues coordinate Zn(2+): Asp-202, Asp-213, and His-276. Residue His-283 coordinates a protein. Residues Glu-309 and Glu-340 each contribute to the Zn(2+) site.

The protein belongs to the peptidase M24A family. Methionine aminopeptidase type 1 subfamily. Associates with the 60S ribosomal subunit of the 80S translational complex. Requires Zn(2+) as cofactor. Co(2+) serves as cofactor. It depends on Mn(2+) as a cofactor. The cofactor is Fe(2+).

The protein resides in the cytoplasm. It catalyses the reaction Release of N-terminal amino acids, preferentially methionine, from peptides and arylamides.. Cotranslationally removes the N-terminal methionine from nascent proteins. The N-terminal methionine is often cleaved when the second residue in the primary sequence is small and uncharged (Met-Ala-, Cys, Gly, Pro, Ser, Thr, or Val). This Dictyostelium discoideum (Social amoeba) protein is Methionine aminopeptidase 1 (metap1).